Reading from the N-terminus, the 374-residue chain is 5-pentadecatrienyl resorcinol O-methyltransferase (374 aa).

The S-adenosyl-L-methionine site is built by Asp239, Asp261, Met262, and Lys275. His279 acts as the Proton acceptor in catalysis.

This sequence belongs to the class I-like SAM-binding methyltransferase superfamily. Cation-independent O-methyltransferase family. COMT subfamily. In terms of assembly, homodimer. Expressed predominantly in root hairs.

It carries out the reaction (8Z,11Z)-5-(pentadeca-8,11,14-trien-1-yl)resorcinol + S-adenosyl-L-methionine = (8Z,11Z)-5-(pentadeca- 8,11,14-trien-1-yl)resorcinol-3-methyl ether + S-adenosyl-L-homocysteine + H(+). In terms of biological role, O-methyltransferase involved in the biosynthetic pathway of the phytotoxin sorgoleone, a potent broad-spectrum inhibitor active against many agronomically important monocot and dicot weed species. Substrate specificity for alkylresorcinols. Strong preference for a five carbons alkyl side chain. The chain is 5-pentadecatrienyl resorcinol O-methyltransferase (OMT3) from Sorghum bicolor (Sorghum).